We begin with the raw amino-acid sequence, 310 residues long: 4-diphosphocytidyl-2-C-methyl-D-erythritol kinase (310 aa).

K10 is an active-site residue. An ATP-binding site is contributed by 102-112 (PVAGGMAGGSA). Residue D144 is part of the active site. The segment at 289-310 (TRTARGPAAGAQLLPGPVGSFA) is disordered.

Belongs to the GHMP kinase family. IspE subfamily.

The enzyme catalyses 4-CDP-2-C-methyl-D-erythritol + ATP = 4-CDP-2-C-methyl-D-erythritol 2-phosphate + ADP + H(+). It functions in the pathway isoprenoid biosynthesis; isopentenyl diphosphate biosynthesis via DXP pathway; isopentenyl diphosphate from 1-deoxy-D-xylulose 5-phosphate: step 3/6. Catalyzes the phosphorylation of the position 2 hydroxy group of 4-diphosphocytidyl-2C-methyl-D-erythritol. This Cutibacterium acnes (strain DSM 16379 / KPA171202) (Propionibacterium acnes) protein is 4-diphosphocytidyl-2-C-methyl-D-erythritol kinase.